The chain runs to 327 residues: Peroxidase 21 (327 aa).

A signal peptide spans 1–28; sequence MANAKPFCLLGFFCLLLQLFSIFHIGNG. 4 cysteine pairs are disulfide-bonded: Cys-39/Cys-118, Cys-72/Cys-77, Cys-124/Cys-323, and Cys-204/Cys-231. His-70 (proton acceptor) is an active-site residue. Asp-71, Val-74, Asp-78, and Ser-80 together coordinate Ca(2+). Position 167 (Pro-167) interacts with substrate. The N-linked (GlcNAc...) asparagine glycan is linked to Asn-170. A heme b-binding site is contributed by His-197. Ser-198 provides a ligand contact to Ca(2+). 3 residues coordinate Ca(2+): Asp-247, Thr-250, and Asp-255.

Belongs to the peroxidase family. Classical plant (class III) peroxidase subfamily. It depends on heme b as a cofactor. The cofactor is Ca(2+). Preferentially expressed in roots and leaves, slightly in stems.

The catalysed reaction is 2 a phenolic donor + H2O2 = 2 a phenolic radical donor + 2 H2O. Removal of H(2)O(2), oxidation of toxic reductants, biosynthesis and degradation of lignin, suberization, auxin catabolism, response to environmental stresses such as wounding, pathogen attack and oxidative stress. These functions might be dependent on each isozyme/isoform in each plant tissue. In terms of biological role, might function as heat shock-like defense protein. May be implicated in the systemic acquired resistance response. This is Peroxidase 21 (PER21) from Arabidopsis thaliana (Mouse-ear cress).